A 278-amino-acid chain; its full sequence is MRKTITDIQQMKVRGEPIAMLTAYDATIAALFDAAGVPMLLVGDSLGDNVLGFSSTVPVTIEDMVRHTAAVARGAQSALIVADMPFLTYATLEMAVAAARRLMQEGGAQAVKLEGGQAMVPIVRRLVECGVPVMGHLGYTPQSVHLFGKARVQGRSAAAARRMIEDALALEAAGAFALVLELVPAQLAAAITERLRIPTIGIGAGPHCDGQVQVFTDILGLRDDFKPRHTRRFAELAPLIRSAVAAYVAAVGERSFPTAEHSSRMDEAELREALEGLS.

Mg(2+)-binding residues include Asp-44 and Asp-83. Residues 44–45 (DS), Asp-83, and Lys-112 each bind 3-methyl-2-oxobutanoate. Glu-114 is a Mg(2+) binding site. Residue Glu-181 is the Proton acceptor of the active site.

It belongs to the PanB family. Homodecamer; pentamer of dimers. It depends on Mg(2+) as a cofactor.

It localises to the cytoplasm. It catalyses the reaction 3-methyl-2-oxobutanoate + (6R)-5,10-methylene-5,6,7,8-tetrahydrofolate + H2O = 2-dehydropantoate + (6S)-5,6,7,8-tetrahydrofolate. It functions in the pathway cofactor biosynthesis; (R)-pantothenate biosynthesis; (R)-pantoate from 3-methyl-2-oxobutanoate: step 1/2. Functionally, catalyzes the reversible reaction in which hydroxymethyl group from 5,10-methylenetetrahydrofolate is transferred onto alpha-ketoisovalerate to form ketopantoate. This Roseiflexus sp. (strain RS-1) protein is 3-methyl-2-oxobutanoate hydroxymethyltransferase.